We begin with the raw amino-acid sequence, 187 residues long: Ion-translocating oxidoreductase complex subunit B (187 aa).

The interval 1–26 (MTHILFAVLVLALLALAFGIILGFAA) is hydrophobic. The 59-residue stretch at 32 to 90 (EADPIVDQLDALLPQTQCGQCGYPGCKPYAEALANGDQINKCVPGGDATMRKIADLMGV) folds into the 4Fe-4S domain. [4Fe-4S] cluster contacts are provided by cysteine 49, cysteine 52, cysteine 57, cysteine 73, cysteine 115, cysteine 118, cysteine 121, cysteine 125, cysteine 145, cysteine 148, cysteine 151, and cysteine 155. 4Fe-4S ferredoxin-type domains are found at residues 106 to 135 (KVAF…GATK) and 136 to 165 (AMHT…MIPV).

Belongs to the 4Fe4S bacterial-type ferredoxin family. RnfB subfamily. In terms of assembly, the complex is composed of six subunits: RnfA, RnfB, RnfC, RnfD, RnfE and RnfG. It depends on [4Fe-4S] cluster as a cofactor.

The protein localises to the cell inner membrane. In terms of biological role, part of a membrane-bound complex that couples electron transfer with translocation of ions across the membrane. The polypeptide is Ion-translocating oxidoreductase complex subunit B (Aeromonas salmonicida (strain A449)).